The following is a 498-amino-acid chain: Guanosine-5'-triphosphate,3'-diphosphate pyrophosphatase (498 aa).

It belongs to the GppA/Ppx family. GppA subfamily.

The enzyme catalyses guanosine 3'-diphosphate 5'-triphosphate + H2O = guanosine 3',5'-bis(diphosphate) + phosphate + H(+). The protein operates within purine metabolism; ppGpp biosynthesis; ppGpp from GTP: step 2/2. Functionally, catalyzes the conversion of pppGpp to ppGpp. Guanosine pentaphosphate (pppGpp) is a cytoplasmic signaling molecule which together with ppGpp controls the 'stringent response', an adaptive process that allows bacteria to respond to amino acid starvation, resulting in the coordinated regulation of numerous cellular activities. The protein is Guanosine-5'-triphosphate,3'-diphosphate pyrophosphatase of Yersinia pseudotuberculosis serotype O:1b (strain IP 31758).